Here is a 253-residue protein sequence, read N- to C-terminus: Hydroxyacylglutathione hydrolase (253 aa).

7 residues coordinate Zn(2+): His-59, His-61, Asp-63, His-64, His-118, Asp-143, and His-181.

The protein belongs to the metallo-beta-lactamase superfamily. Glyoxalase II family. Monomer. Zn(2+) is required as a cofactor.

The enzyme catalyses an S-(2-hydroxyacyl)glutathione + H2O = a 2-hydroxy carboxylate + glutathione + H(+). The protein operates within secondary metabolite metabolism; methylglyoxal degradation; (R)-lactate from methylglyoxal: step 2/2. In terms of biological role, thiolesterase that catalyzes the hydrolysis of S-D-lactoyl-glutathione to form glutathione and D-lactic acid. The polypeptide is Hydroxyacylglutathione hydrolase (Prochlorococcus marinus (strain MIT 9211)).